Reading from the N-terminus, the 274-residue chain is MEKPPVDPQNPWLELRRLTPARIALGRTGTSLPTRAQLDFQYAHAQARDAVHLPFDHAALSAQLNERQRESLLLHSAAVDRNSYLQRPDLGRKLSDQSAQTLREYAQAHPGGVDLVIVVADGLSALAVHRHTLPFLTRLEEQMSADEWSTAPVVLVEQGRVAIGDEIGQLLGAKMVVMLIGERPGLSSPDSLGLYFTYNPKVGLTDAYRNCISNVRLEGLSYGMAAHRLLYLMREACRRQLSGVNLKDEAQVQTLESEAGTDMKSNFLLDPPPA.

Valine 161, glutamate 182, and cysteine 211 together coordinate adenosylcob(III)alamin.

Belongs to the EutC family. The basic unit is a heterodimer which dimerizes to form tetramers. The heterotetramers trimerize; 6 large subunits form a core ring with 6 small subunits projecting outwards. The cofactor is adenosylcob(III)alamin.

The protein localises to the bacterial microcompartment. It catalyses the reaction ethanolamine = acetaldehyde + NH4(+). The protein operates within amine and polyamine degradation; ethanolamine degradation. Functionally, catalyzes the deamination of various vicinal amino-alcohols to oxo compounds. Allows this organism to utilize ethanolamine as the sole source of nitrogen and carbon in the presence of external vitamin B12. The polypeptide is Ethanolamine ammonia-lyase small subunit (Pseudomonas fluorescens (strain Pf0-1)).